The chain runs to 1153 residues: Otoancorin (1153 aa).

The N-terminal stretch at 1–22 (MSQEPTTYSLFLFLFLSHGVSS) is a signal peptide. N-linked (GlcNAc...) asparagine glycosylation occurs at Asn156. N-linked (GlcNAc...) (complex) asparagine glycosylation is present at Asn211. Asn244, Asn289, Asn321, Asn394, Asn398, Asn460, Asn544, Asn812, Asn911, and Asn974 each carry an N-linked (GlcNAc...) asparagine glycan. Residues 1109–1128 (HSWQDAPASAGPTRTSSSRS) form a disordered region. Ala1130 is lipidated: GPI-anchor amidated alanine. A propeptide spans 1131–1153 (GALQSWGLWLGCPLLVLMAKLLW) (removed in mature form).

The protein belongs to the stereocilin family.

It is found in the apical cell membrane. It localises to the secreted. Its subcellular location is the extracellular space. The protein resides in the extracellular matrix. In terms of biological role, may act as an adhesion molecule. The polypeptide is Otoancorin (OTOA) (Homo sapiens (Human)).